Consider the following 155-residue polypeptide: UPF0266 membrane protein lin0773 (155 aa).

Transmembrane regions (helical) follow at residues Ile8–Ile28, Arg46–Phe66, and Pro70–Phe90.

The protein belongs to the UPF0266 family.

The protein resides in the cell membrane. This is UPF0266 membrane protein lin0773 from Listeria innocua serovar 6a (strain ATCC BAA-680 / CLIP 11262).